Reading from the N-terminus, the 245-residue chain is Orotidine 5'-phosphate decarboxylase (245 aa).

Substrate contacts are provided by residues aspartate 22, lysine 44, aspartate 71–threonine 80, threonine 131, arginine 192, glutamine 201, glycine 221, and arginine 222. Lysine 73 functions as the Proton donor in the catalytic mechanism.

This sequence belongs to the OMP decarboxylase family. Type 1 subfamily. Homodimer.

It carries out the reaction orotidine 5'-phosphate + H(+) = UMP + CO2. It functions in the pathway pyrimidine metabolism; UMP biosynthesis via de novo pathway; UMP from orotate: step 2/2. In terms of biological role, catalyzes the decarboxylation of orotidine 5'-monophosphate (OMP) to uridine 5'-monophosphate (UMP). The sequence is that of Orotidine 5'-phosphate decarboxylase from Shigella flexneri serotype 5b (strain 8401).